A 113-amino-acid chain; its full sequence is Nucleoid-associated protein Synpcc7942_0464 (113 aa).

This sequence belongs to the YbaB/EbfC family. As to quaternary structure, homodimer.

The protein resides in the cytoplasm. Its subcellular location is the nucleoid. In terms of biological role, binds to DNA and alters its conformation. May be involved in regulation of gene expression, nucleoid organization and DNA protection. This is Nucleoid-associated protein Synpcc7942_0464 from Synechococcus elongatus (strain ATCC 33912 / PCC 7942 / FACHB-805) (Anacystis nidulans R2).